A 201-amino-acid polypeptide reads, in one-letter code: Holliday junction branch migration complex subunit RuvA (201 aa).

The segment at 1-63 (MYDYIKGTVT…EDNISLFGFQ (63 aa)) is domain I. Residues 64-142 (TTEERYLFKK…DVVASEIVYV (79 aa)) are domain II. The tract at residues 143–153 (APENDMVAGLS) is flexible linker. The tract at residues 153–201 (SPQLEEAVLALEALGYSTRELKKVIPKLAKEEDLTSDAYIKLALQLMTK) is domain III.

The protein belongs to the RuvA family. In terms of assembly, homotetramer. Forms an RuvA(8)-RuvB(12)-Holliday junction (HJ) complex. HJ DNA is sandwiched between 2 RuvA tetramers; dsDNA enters through RuvA and exits via RuvB. An RuvB hexamer assembles on each DNA strand where it exits the tetramer. Each RuvB hexamer is contacted by two RuvA subunits (via domain III) on 2 adjacent RuvB subunits; this complex drives branch migration. In the full resolvosome a probable DNA-RuvA(4)-RuvB(12)-RuvC(2) complex forms which resolves the HJ.

The protein localises to the cytoplasm. Its function is as follows. The RuvA-RuvB-RuvC complex processes Holliday junction (HJ) DNA during genetic recombination and DNA repair, while the RuvA-RuvB complex plays an important role in the rescue of blocked DNA replication forks via replication fork reversal (RFR). RuvA specifically binds to HJ cruciform DNA, conferring on it an open structure. The RuvB hexamer acts as an ATP-dependent pump, pulling dsDNA into and through the RuvAB complex. HJ branch migration allows RuvC to scan DNA until it finds its consensus sequence, where it cleaves and resolves the cruciform DNA. This chain is Holliday junction branch migration complex subunit RuvA, found in Listeria monocytogenes serotype 4a (strain HCC23).